Here is a 116-residue protein sequence, read N- to C-terminus: Transcription elongation factor SPT4 homolog 2 (116 aa).

A C4-type zinc finger spans residues 19–39 (CLRCRLVKTYDQFRDAGCENC).

This sequence belongs to the SPT4 family.

Its subcellular location is the nucleus. Functionally, may regulate transcription elongation by RNA polymerase II. May enhance transcriptional pausing at sites proximal to the promoter, which may in turn facilitate the assembly of an elongation competent RNA polymerase II complex. The polypeptide is Transcription elongation factor SPT4 homolog 2 (Arabidopsis thaliana (Mouse-ear cress)).